Reading from the N-terminus, the 493-residue chain is Ectonucleotide pyrophosphatase/phosphodiesterase 2 (493 aa).

The Cytoplasmic segment spans residues 1-28 (MLLFEQPVDLEKNNEDDTNIKPFAISRH). A helical; Signal-anchor for type II membrane protein transmembrane segment spans residues 29-45 (FLLKLLLCGIILIELLL). Residues 46 to 493 (YSKCPKPIDN…KTKKEKSLLQ (448 aa)) lie on the Extracellular side of the membrane. Residues asparagine 62, asparagine 69, and asparagine 112 are each glycosylated (N-linked (GlcNAc...) asparagine). Residues 76-438 (TLTILISIDG…IGIMGTHGYN (363 aa)) are phosphodiesterase. Residue threonine 127 is the Nucleophile of the active site. Asparagine 153 and asparagine 441 each carry an N-linked (GlcNAc...) asparagine glycan.

It belongs to the nucleotide pyrophosphatase/phosphodiesterase family. In terms of processing, autophosphorylated as part of the catalytic cycle of phosphodiesterase/pyrophosphatase activity.

Its subcellular location is the membrane. It catalyses the reaction Hydrolytically removes 5'-nucleotides successively from the 3'-hydroxy termini of 3'-hydroxy-terminated oligonucleotides.. The catalysed reaction is a ribonucleoside 5'-triphosphate + H2O = a ribonucleoside 5'-phosphate + diphosphate + H(+). The enzyme catalyses a 2'-deoxyribonucleoside 5'-triphosphate + H2O = a 2'-deoxyribonucleoside 5'-phosphate + diphosphate + H(+). Functionally, mediates extracellular nucleotide derived phosphate hydrolysis along with NPP1 and PHO5. The protein is Ectonucleotide pyrophosphatase/phosphodiesterase 2 (NPP2) of Saccharomyces cerevisiae (strain ATCC 204508 / S288c) (Baker's yeast).